Here is a 181-residue protein sequence, read N- to C-terminus: Negative modulator of initiation of replication (181 aa).

3 interaction with DNA regions span residues 87-88, 116-120, and 150-156; these read AV, RTRVY, and NTNTGRK.

It belongs to the SeqA family. As to quaternary structure, homodimer. Polymerizes to form helical filaments.

It localises to the cytoplasm. Its function is as follows. Negative regulator of replication initiation, which contributes to regulation of DNA replication and ensures that replication initiation occurs exactly once per chromosome per cell cycle. Binds to pairs of hemimethylated GATC sequences in the oriC region, thus preventing assembly of replication proteins and re-initiation at newly replicated origins. Repression is relieved when the region becomes fully methylated. The chain is Negative modulator of initiation of replication from Shigella dysenteriae serotype 1 (strain Sd197).